The sequence spans 220 residues: Thiopurine S-methyltransferase (220 aa).

Positions 10, 45, 66, and 123 each coordinate S-adenosyl-L-methionine.

This sequence belongs to the class I-like SAM-binding methyltransferase superfamily. TPMT family.

It is found in the cytoplasm. The enzyme catalyses S-adenosyl-L-methionine + a thiopurine = S-adenosyl-L-homocysteine + a thiopurine S-methylether.. The polypeptide is Thiopurine S-methyltransferase (Pseudomonas syringae pv. tomato (strain ATCC BAA-871 / DC3000)).